We begin with the raw amino-acid sequence, 511 residues long: Zinc finger CCCH-type with G patch domain-containing protein (511 aa).

N-acetylmethionine is present on M1. S70 is subject to Phosphoserine. The segment at 92–129 is disordered; that stretch reads PGAPCNDSETAPGSEVQPGSTSSALEEEEEDPDLEELS. The span at 98 to 115 shows a compositional bias: polar residues; it reads DSETAPGSEVQPGSTSSA. Positions 116-127 are enriched in acidic residues; sequence LEEEEEDPDLEE. The C3H1-type zinc finger occupies 174–200; that stretch reads KSLKPCPFFLEGKCRFKENCRFSHGQV. Residues 266–291 are disordered; the sequence is PPLRTEATESSDSDTGDASDSSYARV. At S276 the chain carries Phosphoserine. T280 is modified (phosphothreonine). The 47-residue stretch at 313-359 folds into the G-patch domain; the sequence is TRGIGSKLLVKMGYEFGKGLGRHAEGRVEPIHAVVLPRGKSLDQCAE. The residue at position 353 (S353) is a Phosphoserine. Disordered stretches follow at residues 363 to 393 and 490 to 511; these read KKTK…PPRN and AQEA…MTEF. Over residues 491–511 the composition is skewed to basic and acidic residues; it reads QEADLQRKQRKADTHRKMTEF.

In terms of assembly, interacts with CHD4/Mi-2; the interaction is direct.

Its subcellular location is the nucleus. Transcription repressor that specifically binds the 5'-GGAG[GA]A[GA]A-3' consensus sequence. Represses transcription by recruiting the chromatin multiprotein complex NuRD to target promoters. Negatively regulates expression of EGFR, a gene involved in cell proliferation, survival and migration. Its ability to repress genes of the EGFR pathway suggest it may act as a tumor suppressor. This is Zinc finger CCCH-type with G patch domain-containing protein (Zgpat) from Mus musculus (Mouse).